Consider the following 342-residue polypeptide: Palmitoyltransferase PFA4 (342 aa).

Residues 1 to 8 (MITFSNPW) lie on the Cytoplasmic side of the membrane. A helical membrane pass occupies residues 9-29 (IGVIIPCIIIFTLSTFSAIYI). Over 30 to 38 (LPHHVSNNE) the chain is Lumenal. The chain crosses the membrane as a helical span at residues 39–59 (LTLFICASAMVWISYIIAIIV). At 60–124 (PPGSPPKNYT…GHRNMPHFMR (65 aa)) the chain is on the cytoplasmic side. The DHHC domain occupies 77–127 (MYCLKCKAYKPERTHHSKALGVCVLKMDHHCPWTNNTVGHRNMPHFMRFLV). Catalysis depends on Cys107, which acts as the S-palmitoyl cysteine intermediate. Residues 125–145 (FLVWVDMTVGYLFIRLCIRIM) traverse the membrane as a helical segment. Over 146-162 (KLWRDKHLPSYLFDKTE) the chain is Lumenal. A helical membrane pass occupies residues 163 to 183 (VILSIVFLPASFFVLFTVGIL). Over 184 to 342 (TIRVFVNMCN…ADFGVEHTDI (159 aa)) the chain is Cytoplasmic.

This sequence belongs to the DHHC palmitoyltransferase family. PFA4 subfamily.

The protein resides in the endoplasmic reticulum membrane. It catalyses the reaction L-cysteinyl-[protein] + hexadecanoyl-CoA = S-hexadecanoyl-L-cysteinyl-[protein] + CoA. Functionally, mediates the reversible addition of palmitate to target proteins, thereby regulating their membrane association and biological function. The chain is Palmitoyltransferase PFA4 from Yarrowia lipolytica (strain CLIB 122 / E 150) (Yeast).